We begin with the raw amino-acid sequence, 185 residues long: MKMIVGLGNIGKEYDKTRHNTGFMVVDELAKKHDINNFKVQSDALIADFRVNGEKVLLVKPTTYMNDSGRAVRPLMDYYDVDLNDMIVAYDDMDMPVGKIRLRQKGSAGGHNGIKSIIAHVGTQSFNRVRVGIDHPTKESVVDYVLGKFRKEQITDFEIGVQNAVAALEDWTTIENFSQLMNKYN.

Tyr-14 is a tRNA binding site. His-19 functions as the Proton acceptor in the catalytic mechanism. 3 residues coordinate tRNA: Tyr-64, Asn-66, and Asn-112.

The protein belongs to the PTH family. Monomer.

The protein localises to the cytoplasm. The catalysed reaction is an N-acyl-L-alpha-aminoacyl-tRNA + H2O = an N-acyl-L-amino acid + a tRNA + H(+). In terms of biological role, hydrolyzes ribosome-free peptidyl-tRNAs (with 1 or more amino acids incorporated), which drop off the ribosome during protein synthesis, or as a result of ribosome stalling. Functionally, catalyzes the release of premature peptidyl moieties from peptidyl-tRNA molecules trapped in stalled 50S ribosomal subunits, and thus maintains levels of free tRNAs and 50S ribosomes. In Pediococcus pentosaceus (strain ATCC 25745 / CCUG 21536 / LMG 10740 / 183-1w), this protein is Peptidyl-tRNA hydrolase.